The sequence spans 557 residues: Alpha-glucosidase (557 aa).

Asp-201 acts as the Nucleophile in catalysis. Glu-256 acts as the Proton donor in catalysis.

This sequence belongs to the glycosyl hydrolase 13 family.

The catalysed reaction is Hydrolysis of terminal, non-reducing (1-&gt;4)-linked alpha-D-glucose residues with release of alpha-D-glucose.. This chain is Alpha-glucosidase (agl), found in Pediococcus pentosaceus.